Here is a 343-residue protein sequence, read N- to C-terminus: Dihydroorotase (343 aa).

Zn(2+)-binding residues include H14 and H16. Residues 16–18 and N42 contribute to the substrate site; that span reads HVR. The Zn(2+) site is built by K99, H136, and H174. Residue K99 is modified to N6-carboxylysine. H136 serves as a coordination point for substrate. L219 serves as a coordination point for substrate. A Zn(2+)-binding site is contributed by D247. D247 is a catalytic residue. Positions 251 and 263 each coordinate substrate.

It belongs to the metallo-dependent hydrolases superfamily. DHOase family. Class II DHOase subfamily. Homodimer. Requires Zn(2+) as cofactor.

It catalyses the reaction (S)-dihydroorotate + H2O = N-carbamoyl-L-aspartate + H(+). It functions in the pathway pyrimidine metabolism; UMP biosynthesis via de novo pathway; (S)-dihydroorotate from bicarbonate: step 3/3. Catalyzes the reversible cyclization of carbamoyl aspartate to dihydroorotate. In Variovorax paradoxus (strain S110), this protein is Dihydroorotase.